A 527-amino-acid chain; its full sequence is Putative GTP-binding protein 6 (527 aa).

The region spanning proline 306–threonine 470 is the Hflx-type G domain. Residues glycine 312–threonine 319, phenylalanine 338–aspartate 342, aspartate 360–glycine 363, asparagine 429–aspartate 432, and serine 448–leucine 450 contribute to the GTP site. Mg(2+) is bound by residues threonine 319 and threonine 340.

The protein belongs to the TRAFAC class OBG-HflX-like GTPase superfamily. HflX GTPase family. Requires Mg(2+) as cofactor.

The sequence is that of Putative GTP-binding protein 6 (gtpbp6) from Xenopus laevis (African clawed frog).